A 498-amino-acid chain; its full sequence is Zinc finger protein 395 (498 aa).

The interval 129–165 is disordered; the sequence is QKPLSSPIEQSLPTSPGATSTSAQRSVSRSIDVPKRR. The span at 130-157 shows a compositional bias: polar residues; that stretch reads KPLSSPIEQSLPTSPGATSTSAQRSVSR. Residues 171-180 carry the Nuclear export signal motif; sequence MDEMMAAMVL. The segment at 209 to 245 is disordered; it reads KEGGDVSDSGSSTTSGHWSASSGVSTPSPPHTDASPK. The span at 214-231 shows a compositional bias: low complexity; sequence VSDSGSSTTSGHWSASSG. Residues 285–310 form a C2H2-type zinc finger; that stretch reads YKCLWPNCGKLLRSIVGIKRHVKTQH.

It localises to the cytoplasm. The protein resides in the nucleus. This is Zinc finger protein 395 (znf395) from Xenopus laevis (African clawed frog).